The sequence spans 373 residues: Alpha-1,3-mannosyl-glycoprotein 4-beta-N-acetylglucosaminyltransferase-like protein MGAT4D (373 aa).

Topologically, residues 1-5 (MKAKN) are cytoplasmic. The chain crosses the membrane as a helical; Signal-anchor for type II membrane protein span at residues 6–26 (VNLLFAFVAVLLFGFSCFCIS). Residues 27–373 (RMNQTNNQLI…REQHLKDNYY (347 aa)) are Lumenal-facing. Asn29, Asn54, and Asn144 each carry an N-linked (GlcNAc...) asparagine glycan.

It belongs to the glycosyltransferase 54 family. In terms of assembly, isoform 2 self-associates; specifically in the endoplasmic reticulum prior to its translocation to the Golgi. Isoform 1 and isoform 2 interact with MGAT1, MGAT3 and MAN2A2; isoform 2 interacts specifically with MGAT1 in the Golgi. Isoform 2 is N-glycosylated; consisting of high-mannose and/or hybrid glycans. As to expression, isoform 1 and isoform 2 are specifically expressed in testis. Isoform 2 is expressed in spermatocytes but not in spermatids. Isoform 1 is expressed in spermatids.

The protein localises to the endoplasmic reticulum membrane. Its subcellular location is the endoplasmic reticulum-Golgi intermediate compartment membrane. The protein resides in the golgi apparatus membrane. Its function is as follows. May play a role in male spermatogenesis. In vitro acts as inhibitor of MGAT1 activity causing cell surface proteins to carry mainly high mannose N-glycans. The function is mediated by its lumenal domain and occurs specifically in the Golgi. A catalytic glucosyltransferase activity is not detected. May be involved in regulation of Sertoli-germ cell interactions during specific stages of spermatogenesis. This Mus musculus (Mouse) protein is Alpha-1,3-mannosyl-glycoprotein 4-beta-N-acetylglucosaminyltransferase-like protein MGAT4D.